Consider the following 229-residue polypeptide: Acetate kinase EutQ (229 aa).

Residues 1–100 (MKKLITANDI…EKVLKEKQSL (100 aa)) are required for interaction with EutM.

This sequence belongs to the EutQ cupin-like family. Homodimer. Interacts with the N-terminus of EutM; a probably cytoplasm-facing helix (EutM 'Val-49' to 'Gln-64') interacts with N-terminus of EutQ. The cofactor is Does not need divalent cations..

The protein resides in the bacterial microcompartment. The enzyme catalyses acetate + ATP = acetyl phosphate + ADP. It participates in amine and polyamine degradation; ethanolamine degradation. Its function is as follows. A bidirectional acetate kinase that may drive flux through the ethanolamine (EA) degradation pathway under anoxic conditions found when this bacteria infects the host intestine. It may generate ATP that can be used by other enzymes (EutA and EutT) in the eut pathway. Can use GTP instead of ATP with reduced efficiency. Might be required to correctly target EutE to bacterial microcompartments (BMC). Required for the biogenesis of multiple mobile BMCs per cell. Might serve as an assembly hub for BMC shell proteins. Expression of eutK, eutL, eutM, eutN, eutS (eutSMNLK) in E.coli leads to formation of a single BMC; coexpression of eutQ with eutSMNLK permits E.coli to make cells with more than one mobile BMC, as is usual in vivo. EutS alone also forms BMCs, but in the presence of eutQ both BMCs and protein filaments are formed. In terms of biological role, expression of the eut operon allows this bacteria to use ethanolamine (EA) as a carbon, nitrogen and energy source. It relies on cobalamin (vitamin B12) both as a cofactor for the ethanolamine ammonia-lyase (EAL) activity and to induce the operon. EA enhances bacterial survival in macrophages in a concentration-dependent manner, suggesting it is an important nutrient during infection. This Salmonella typhimurium (strain LT2 / SGSC1412 / ATCC 700720) protein is Acetate kinase EutQ (eutQ).